We begin with the raw amino-acid sequence, 313 residues long: Ribosomal protein L11 methyltransferase (313 aa).

S-adenosyl-L-methionine contacts are provided by threonine 154, glycine 179, aspartate 201, and asparagine 242.

Belongs to the methyltransferase superfamily. PrmA family.

The protein resides in the cytoplasm. It catalyses the reaction L-lysyl-[protein] + 3 S-adenosyl-L-methionine = N(6),N(6),N(6)-trimethyl-L-lysyl-[protein] + 3 S-adenosyl-L-homocysteine + 3 H(+). In terms of biological role, methylates ribosomal protein L11. This chain is Ribosomal protein L11 methyltransferase, found in Xanthomonas oryzae pv. oryzae (strain MAFF 311018).